A 195-amino-acid chain; its full sequence is Biogenesis of lysosome-related organelles complex 1 subunit 3 (195 aa).

Over residues 1 to 11 (MESSQGRRRRP) the composition is skewed to basic residues. The interval 1–72 (MESSQGRRRR…PEPEPTVVPV (72 aa)) is disordered. A compositionally biased stretch (low complexity) spans 25–51 (ELSASSSEEELYLGPSGPTRGRPTGLR). At Thr-59 the chain carries Phosphothreonine. Residue Ser-61 is modified to Phosphoserine.

This sequence belongs to the BLOC1S3 family. Octamer composed of one copy each BLOC1S1, BLOC1S2, BLOC1S3, BLOC1S4, BLOC1S5, BLOC1S6, DTNBP1/BLOC1S7 and SNAPIN/BLOC1S8. Interacts directly with BLOC1S2. Component of the biogenesis of lysosome-related organelles complex 1 (BLOC-1) composed of BLOC1S1, BLOC1S2, BLOC1S3, BLOC1S4, BLOC1S5, BLOC1S6, DTNBP1/BLOC1S7 and SNAPIN/BLOC1S8. The BLOC-1 complex associates with the AP-3 protein complex and membrane protein cargos. Interacts with BLOC1S4, BLOC1S5 and BLOC1S6. Post-translationally, phosphorylated. Ubiquitously expressed.

It localises to the cytoplasm. Its function is as follows. Component of the BLOC-1 complex, a complex that is required for normal biogenesis of lysosome-related organelles (LRO), such as platelet dense granules and melanosomes. In concert with the AP-3 complex, the BLOC-1 complex is required to target membrane protein cargos into vesicles assembled at cell bodies for delivery into neurites and nerve terminals. The BLOC-1 complex, in association with SNARE proteins, is also proposed to be involved in neurite extension. Plays a role in intracellular vesicle trafficking. This chain is Biogenesis of lysosome-related organelles complex 1 subunit 3 (Bloc1s3), found in Mus musculus (Mouse).